Here is a 150-residue protein sequence, read N- to C-terminus: Ribosome maturation factor RimP (150 aa).

This sequence belongs to the RimP family.

It is found in the cytoplasm. Its function is as follows. Required for maturation of 30S ribosomal subunits. This chain is Ribosome maturation factor RimP, found in Thermotoga maritima (strain ATCC 43589 / DSM 3109 / JCM 10099 / NBRC 100826 / MSB8).